A 178-amino-acid polypeptide reads, in one-letter code: MPKPTKGPRLGGSPAHERIILRNLASQLFEHGHVVTTVTKAKRVRPLAEKLINRAKTDTVANRRFVNRTITDRGIVHILFTEIGPRMEGRDGGYTRVTRIGNRKGDNAPMAVIEVISDKVAPKAPASAADAKAQINTATEAKEAEPEAPAEDAAAQAPVADEQKAAEVDEKAEEKPEA.

Composition is skewed to low complexity over residues 123–139 and 151–160; these read KAPASAADAKAQINTAT and EDAAAQAPVA. A disordered region spans residues 123-178; sequence KAPASAADAKAQINTATEAKEAEPEAPAEDAAAQAPVADEQKAAEVDEKAEEKPEA. Positions 161–178 are enriched in basic and acidic residues; that stretch reads DEQKAAEVDEKAEEKPEA.

This sequence belongs to the bacterial ribosomal protein bL17 family. In terms of assembly, part of the 50S ribosomal subunit. Contacts protein L32.

In Cutibacterium acnes (strain DSM 16379 / KPA171202) (Propionibacterium acnes), this protein is Large ribosomal subunit protein bL17.